The sequence spans 343 residues: 7-epi-alpha-eudesmol synthase ((2E,6E)-farnesyl diphosphate cyclizing) (343 aa).

Mg(2+) contacts are provided by aspartate 80 and aspartate 84. Positions 80–84 match the DDXXD motif motif; it reads DDQFD. Substrate is bound at residue arginine 177. The Mg(2+) site is built by asparagine 223 and serine 227. Arginine 230 contacts substrate. Glutamate 231 is a binding site for Mg(2+). Position 317–318 (317–318) interacts with substrate; sequence RY.

The protein belongs to the terpene synthase family. Mg(2+) is required as a cofactor.

It catalyses the reaction (2E,6E)-farnesyl diphosphate + H2O = 7-epi-alpha-eudesmol + diphosphate. It participates in secondary metabolite biosynthesis; terpenoid biosynthesis. Functionally, catalyzes the conversion of (2E,6E)-farnesyl diphosphate (FPP) to yield the bicyclic sesquiterpenol 7-epi-alpha-eudesmol via a 1,10-cyclization, which requires the abstraction of the pyrophosphate from FPP to yield the (E,E)-germacradienyl cation. The only accepted substrate is (2E,6E)-farnesyl diphosphate (FPP). This Streptomyces viridochromogenes (strain DSM 40736 / JCM 4977 / BCRC 1201 / Tue 494) protein is 7-epi-alpha-eudesmol synthase ((2E,6E)-farnesyl diphosphate cyclizing).